The chain runs to 130 residues: Fluoride-specific ion channel FluC (130 aa).

4 helical membrane passes run 9-29 (LAII…TIFL), 39-59 (YATF…VTLA), 71-91 (LLLA…ALEV), and 104-124 (VLYG…GSLI). Positions 79 and 82 each coordinate Na(+).

Belongs to the fluoride channel Fluc/FEX (TC 1.A.43) family.

The protein localises to the cell inner membrane. The enzyme catalyses fluoride(in) = fluoride(out). Na(+) is not transported, but it plays an essential structural role and its presence is essential for fluoride channel function. Its function is as follows. Fluoride-specific ion channel. Important for reducing fluoride concentration in the cell, thus reducing its toxicity. The polypeptide is Fluoride-specific ion channel FluC (Synechocystis sp. (strain ATCC 27184 / PCC 6803 / Kazusa)).